The following is a 269-amino-acid chain: Microtubule-associated protein RP/EB family member 1 (269 aa).

Residues 14–116 enclose the Calponin-homology (CH) domain; sequence NLSRHDMLAW…FVQWFKKFFD (103 aa). The disordered stretch occupies residues 168-190; the sequence is RTAVSNKPPAQGISKKPATVGNG. Positions 186–256 constitute an EB1 C-terminal domain; that stretch reads TVGNGDDESA…LYATDEGFVI (71 aa).

It belongs to the MAPRE family.

It localises to the cytoplasm. Its subcellular location is the cytoskeleton. It is found in the microtubule organizing center. The protein resides in the centrosome. The protein localises to the golgi apparatus. It localises to the spindle. Its subcellular location is the spindle pole. Plus-end tracking protein (+TIP) that binds to the plus-end of microtubules and regulates the dynamics of the microtubule cytoskeleton. Promotes cytoplasmic microtubule nucleation and elongation. Involved in mitotic spindle positioning by stabilizing microtubules and promoting dynamic connection between astral microtubules and the cortex during mitotic chromosome segregation. This chain is Microtubule-associated protein RP/EB family member 1 (mapre1), found in Xenopus tropicalis (Western clawed frog).